A 230-amino-acid polypeptide reads, in one-letter code: Probable endonuclease C19F8.04c (230 aa).

A helical membrane pass occupies residues 10-27 (AIIGTGLITTSIGGFFFL). Residues 55 to 216 (KTMFGYVTRV…KKKKLSLWSQ (162 aa)) form the TNase-like domain. The active site involves R104. D109 provides a ligand contact to Ca(2+). Catalysis depends on residues E112 and R152.

Belongs to the LCL3 family.

The protein localises to the mitochondrion. Its subcellular location is the membrane. The chain is Probable endonuclease C19F8.04c from Schizosaccharomyces pombe (strain 972 / ATCC 24843) (Fission yeast).